Reading from the N-terminus, the 370-residue chain is Cytochrome b (370 aa).

Helical transmembrane passes span 25–45 (FGSMLLTCSALQVLTGFFLAV), 69–90 (WMMQNLHAMGASMFFICIYIHI), 105–125 (WLSGTTLLIMLMATAFFGYVL), and 170–190 (FFALHFILPFGIISFSSLHVM). Residues H75 and H89 each coordinate heme b. Heme b is bound by residues H174 and H188. H193 contacts a ubiquinone. The next 4 helical transmembrane spans lie at 218 to 238 (YKDLFMLSVMITLLLTMISFY), 280 to 300 (LGGALALAMSIMILLTMPFTH), 312 to 332 (FMQLMFWTFAATFLVITWTAT), and 339 to 358 (FTMISQVAALIYFLFFISNP).

The protein belongs to the cytochrome b family. As to quaternary structure, the cytochrome bc1 complex contains 3 respiratory subunits (MT-CYB, CYC1 and UQCRFS1), 2 core proteins (UQCRC1 and UQCRC2) and probably 6 low-molecular weight proteins. Heme b is required as a cofactor.

The protein resides in the mitochondrion inner membrane. Its function is as follows. Component of the ubiquinol-cytochrome c reductase complex (complex III or cytochrome b-c1 complex) that is part of the mitochondrial respiratory chain. The b-c1 complex mediates electron transfer from ubiquinol to cytochrome c. Contributes to the generation of a proton gradient across the mitochondrial membrane that is then used for ATP synthesis. This chain is Cytochrome b (MT-CYB), found in Corallus hortulanus enydris (Garden tree boa).